The sequence spans 197 residues: MLPKKIDYIKIALIVVGIIALFLPWLTISASTINIKTDEGIHLSVNLAPFRVSSDIKSDTNNIFVEMMMPYVKQYFDMAVKEKMSTFMMIFGIIPIILYIASIFVDKKAVVVGAGIAGITCASIFVVLFTVGLNSSDSGLALTGGKEVTPIDLITGVVNEKSSYLSKDIIKIQVGTGWYLTMIIGLALIAYPFIRKV.

4 helical membrane passes run 11–31 (IALI…ISAS), 85–105 (STFM…SIFV), 109–129 (AVVV…VVLF), and 174–194 (VGTG…YPFI).

It is found in the cell membrane. This is an uncharacterized protein from Methanocaldococcus jannaschii (strain ATCC 43067 / DSM 2661 / JAL-1 / JCM 10045 / NBRC 100440) (Methanococcus jannaschii).